Reading from the N-terminus, the 559-residue chain is Probable D-2-hydroxyglutarate dehydrogenase, mitochondrial (559 aa).

Residues 1-80 (MARRAAAGLL…MNFEVQKRSF (80 aa)) constitute a mitochondrion transit peptide. The region spanning 131–310 (YKGSSQLLLL…TKIAILTPAK (180 aa)) is the FAD-binding PCMH-type domain.

Belongs to the FAD-binding oxidoreductase/transferase type 4 family. Homodimer. FAD is required as a cofactor.

The protein resides in the mitochondrion. The enzyme catalyses (R)-2-hydroxyglutarate + A = 2-oxoglutarate + AH2. Catalyzes the oxidation of D-2-hydroxyglutarate to alpha-ketoglutarate. The chain is Probable D-2-hydroxyglutarate dehydrogenase, mitochondrial (D2HGDH) from Oryza sativa subsp. indica (Rice).